We begin with the raw amino-acid sequence, 257 residues long: UPF0246 protein RHOS4_29700 (257 aa).

Belongs to the UPF0246 family.

The sequence is that of UPF0246 protein RHOS4_29700 from Cereibacter sphaeroides (strain ATCC 17023 / DSM 158 / JCM 6121 / CCUG 31486 / LMG 2827 / NBRC 12203 / NCIMB 8253 / ATH 2.4.1.) (Rhodobacter sphaeroides).